A 228-amino-acid chain; its full sequence is Phosphoenolpyruvate guanylyltransferase (228 aa).

Residues T148, G164, and S167 each contribute to the phosphoenolpyruvate site.

Belongs to the CofC family.

The catalysed reaction is phosphoenolpyruvate + GTP + H(+) = enolpyruvoyl-2-diphospho-5'-guanosine + diphosphate. It participates in cofactor biosynthesis; coenzyme F420 biosynthesis. In terms of biological role, guanylyltransferase that catalyzes the activation of phosphoenolpyruvate (PEP) as enolpyruvoyl-2-diphospho-5'-guanosine, via the condensation of PEP with GTP. It is involved in the biosynthesis of coenzyme F420, a hydride carrier cofactor. The chain is Phosphoenolpyruvate guanylyltransferase from Thermomonospora curvata (strain ATCC 19995 / DSM 43183 / JCM 3096 / KCTC 9072 / NBRC 15933 / NCIMB 10081 / Henssen B9).